Reading from the N-terminus, the 263-residue chain is Outer membrane protein OmpK (263 aa).

A signal peptide spans 1–20 (MRKSLLALSLLAATSAPVLA).

Belongs to the nucleoside-specific channel-forming outer membrane porin (Tsx) (TC 1.B.10) family.

The protein localises to the cell outer membrane. Its function is as follows. Serves as receptor for a broad-host-range vibriophage, KVP40. This Vibrio parahaemolyticus protein is Outer membrane protein OmpK.